An 895-amino-acid chain; its full sequence is Pentatricopeptide repeat-containing protein At1g74600, chloroplastic (895 aa).

The N-terminal 71 residues, 1 to 71 (MNCLANESLN…CNLRTTKILQ (71 aa)), are a transit peptide targeting the chloroplast. 22 PPR repeats span residues 83–113 (DVFL…IPQP), 114–148 (DVVS…GFEA), 149–183 (NEIS…GYFF), 184–214 (YEVV…SLSA), 215–249 (NVYC…FQKP), 250–280 (DSYT…VIKC), 284–314 (DVFV…IPNP), 315–349 (SVVS…GVEI), 350–384 (NNCT…GFYL), 385–415 (DSSV…LDDI), 417–451 (RQNI…GLRT), 452–483 (DEFS…GLVL), 484–514 (DLTV…IPFK), 515–549 (DNAC…GTSP), 550–584 (DEST…GIDK), 585–615 (GMDL…LPEL), 616–650 (DPVS…GFTM), 651–685 (DSFA…GLCT), 686–716 (EPSV…INGP), 717–751 (DLIA…GFKP), 752–787 (DKVT…GIEP), and 788–818 (ENRH…MHIK). Residues 824 to 895 (WGTLLAACKI…VQKEPGWSSV (72 aa)) form a type E motif; degenerate region.

This sequence belongs to the PPR family. PCMP-E subfamily.

It is found in the plastid. The protein localises to the chloroplast. The chain is Pentatricopeptide repeat-containing protein At1g74600, chloroplastic (PCMP-E69) from Arabidopsis thaliana (Mouse-ear cress).